Reading from the N-terminus, the 424-residue chain is Tyrosine--tRNA ligase (424 aa).

Residue Y37 coordinates L-tyrosine. The 'HIGH' region signature appears at P42 to H51. L-tyrosine is bound by residues Y175 and Q179. Residues K235 to T239 carry the 'KMSKS' region motif. Residue K238 participates in ATP binding. Positions A357–G414 constitute an S4 RNA-binding domain.

Belongs to the class-I aminoacyl-tRNA synthetase family. TyrS type 1 subfamily. As to quaternary structure, homodimer.

Its subcellular location is the cytoplasm. The enzyme catalyses tRNA(Tyr) + L-tyrosine + ATP = L-tyrosyl-tRNA(Tyr) + AMP + diphosphate + H(+). In terms of biological role, catalyzes the attachment of tyrosine to tRNA(Tyr) in a two-step reaction: tyrosine is first activated by ATP to form Tyr-AMP and then transferred to the acceptor end of tRNA(Tyr). In Hamiltonella defensa subsp. Acyrthosiphon pisum (strain 5AT), this protein is Tyrosine--tRNA ligase.